The following is a 245-amino-acid chain: tRNA (guanine-N(1)-)-methyltransferase (245 aa).

Residues Gly114 and 134-139 contribute to the S-adenosyl-L-methionine site; that span reads IGDYIL.

The protein belongs to the RNA methyltransferase TrmD family. In terms of assembly, homodimer.

It localises to the cytoplasm. The catalysed reaction is guanosine(37) in tRNA + S-adenosyl-L-methionine = N(1)-methylguanosine(37) in tRNA + S-adenosyl-L-homocysteine + H(+). Functionally, specifically methylates guanosine-37 in various tRNAs. The protein is tRNA (guanine-N(1)-)-methyltransferase of Listeria welshimeri serovar 6b (strain ATCC 35897 / DSM 20650 / CCUG 15529 / CIP 8149 / NCTC 11857 / SLCC 5334 / V8).